Here is a 264-residue protein sequence, read N- to C-terminus: Acyl-[acyl-carrier-protein]--UDP-N-acetylglucosamine O-acyltransferase (264 aa).

Belongs to the transferase hexapeptide repeat family. LpxA subfamily. As to quaternary structure, homotrimer.

The protein localises to the cytoplasm. It carries out the reaction a (3R)-hydroxyacyl-[ACP] + UDP-N-acetyl-alpha-D-glucosamine = a UDP-3-O-[(3R)-3-hydroxyacyl]-N-acetyl-alpha-D-glucosamine + holo-[ACP]. It participates in glycolipid biosynthesis; lipid IV(A) biosynthesis; lipid IV(A) from (3R)-3-hydroxytetradecanoyl-[acyl-carrier-protein] and UDP-N-acetyl-alpha-D-glucosamine: step 1/6. Its function is as follows. Involved in the biosynthesis of lipid A, a phosphorylated glycolipid that anchors the lipopolysaccharide to the outer membrane of the cell. The sequence is that of Acyl-[acyl-carrier-protein]--UDP-N-acetylglucosamine O-acyltransferase from Actinobacillus pleuropneumoniae serotype 7 (strain AP76).